Reading from the N-terminus, the 291-residue chain is 4-hydroxy-tetrahydrodipicolinate synthase (291 aa).

A pyruvate-binding site is contributed by Thr44. Tyr132 acts as the Proton donor/acceptor in catalysis. The Schiff-base intermediate with substrate role is filled by Lys161. A pyruvate-binding site is contributed by Ile202.

Belongs to the DapA family. In terms of assembly, homotetramer; dimer of dimers.

It localises to the cytoplasm. It catalyses the reaction L-aspartate 4-semialdehyde + pyruvate = (2S,4S)-4-hydroxy-2,3,4,5-tetrahydrodipicolinate + H2O + H(+). Its pathway is amino-acid biosynthesis; L-lysine biosynthesis via DAP pathway; (S)-tetrahydrodipicolinate from L-aspartate: step 3/4. Its function is as follows. Catalyzes the condensation of (S)-aspartate-beta-semialdehyde [(S)-ASA] and pyruvate to 4-hydroxy-tetrahydrodipicolinate (HTPA). This Endomicrobium trichonymphae protein is 4-hydroxy-tetrahydrodipicolinate synthase.